The following is a 326-amino-acid chain: Fructose-1,6-bisphosphatase class 1 (326 aa).

The protein belongs to the FBPase class 1 family. Homotetramer.

It localises to the cytoplasm. The catalysed reaction is beta-D-fructose 1,6-bisphosphate + H2O = beta-D-fructose 6-phosphate + phosphate. The protein operates within carbohydrate biosynthesis; gluconeogenesis. The sequence is that of Fructose-1,6-bisphosphatase class 1 from Methylobacterium sp. (strain 4-46).